Consider the following 289-residue polypeptide: ATP synthase subunit a (289 aa).

Helical transmembrane passes span K41–F61, Y101–A121, I129–K149, T166–V186, F189–F209, F222–I242, and A244–H264.

It belongs to the ATPase A chain family. As to quaternary structure, F-type ATPases have 2 components, CF(1) - the catalytic core - and CF(0) - the membrane proton channel. CF(1) has five subunits: alpha(3), beta(3), gamma(1), delta(1), epsilon(1). CF(0) has three main subunits: a(1), b(2) and c(9-12). The alpha and beta chains form an alternating ring which encloses part of the gamma chain. CF(1) is attached to CF(0) by a central stalk formed by the gamma and epsilon chains, while a peripheral stalk is formed by the delta and b chains.

The protein localises to the cell membrane. Its function is as follows. Key component of the proton channel; it plays a direct role in the translocation of protons across the membrane. In Frankia alni (strain DSM 45986 / CECT 9034 / ACN14a), this protein is ATP synthase subunit a.